The sequence spans 576 residues: MAGUK p55 subfamily member 2 (576 aa).

L27 domains lie at 8–60 (SETA…FMQQ) and 84–142 (LEAV…YETP). Ser-42 is subject to Phosphoserine. Thr-141 is modified (phosphothreonine). Ser-145 carries the phosphoserine modification. One can recognise a PDZ domain in the interval 185–240 (ELVIARILHGGMVAQQGLLHVGDIIKEVNGQPVGSDPRALQELLRNASGSVILKIL). The SH3 domain occupies 249 to 317 (PRQVFVKCHF…PSQLLEEKRK (69 aa)). The 188-residue stretch at 374 to 561 (RKTLVLIGAQ…TFRELQTAME (188 aa)) folds into the Guanylate kinase-like domain.

The protein belongs to the MAGUK family. As to quaternary structure, can homomultimerise. Interacts with CACNG2. Interacts (via the SH3-Guanylate kinase-like sub-module) with DLG4/PSD95 and DLGAP1/GKAP. Interacts (via the PDZ domain) with CADM1 (via C-terminus). Interacts with KCNN2/SK2 (via N-terminal domain). Interacts with SRC. Post-translationally, phosphorylated by SRC.

It is found in the cytoplasm. Its subcellular location is the cytoskeleton. The protein localises to the membrane. It localises to the cell projection. The protein resides in the dendrite. It is found in the postsynaptic density. In terms of biological role, postsynaptic MAGUK scaffold protein that links CADM1 cell adhesion molecules to core components of the postsynaptic density. In CA1 pyramidal neurons, required for synaptic KCNN2-containing channel function and long-term potentiation expression. Seems to negatively regulate SRC function in epithelial cells. This chain is MAGUK p55 subfamily member 2, found in Homo sapiens (Human).